A 154-amino-acid polypeptide reads, in one-letter code: Transcriptional repressor NrdR (154 aa).

A zinc finger spans residues 3–34 (CPFCRHPDSRVVDSREADEGQAIRRRRSCPEC). Residues 46 to 136 (LSVVKRSGVT…VYRSFSSAED (91 aa)) form the ATP-cone domain.

It belongs to the NrdR family. The cofactor is Zn(2+).

Negatively regulates transcription of bacterial ribonucleotide reductase nrd genes and operons by binding to NrdR-boxes. This chain is Transcriptional repressor NrdR, found in Rhodococcus jostii (strain RHA1).